The sequence spans 363 residues: Phosphoserine aminotransferase (363 aa).

Residue Arg42 participates in L-glutamate binding. Residues 76–77 (GR), Trp102, Thr156, Asp175, and Gln198 contribute to the pyridoxal 5'-phosphate site. Lys199 carries the post-translational modification N6-(pyridoxal phosphate)lysine. 240–241 (NT) serves as a coordination point for pyridoxal 5'-phosphate.

It belongs to the class-V pyridoxal-phosphate-dependent aminotransferase family. SerC subfamily. In terms of assembly, homodimer. It depends on pyridoxal 5'-phosphate as a cofactor.

The protein localises to the cytoplasm. It catalyses the reaction O-phospho-L-serine + 2-oxoglutarate = 3-phosphooxypyruvate + L-glutamate. The catalysed reaction is 4-(phosphooxy)-L-threonine + 2-oxoglutarate = (R)-3-hydroxy-2-oxo-4-phosphooxybutanoate + L-glutamate. It participates in amino-acid biosynthesis; L-serine biosynthesis; L-serine from 3-phospho-D-glycerate: step 2/3. Its pathway is cofactor biosynthesis; pyridoxine 5'-phosphate biosynthesis; pyridoxine 5'-phosphate from D-erythrose 4-phosphate: step 3/5. Catalyzes the reversible conversion of 3-phosphohydroxypyruvate to phosphoserine and of 3-hydroxy-2-oxo-4-phosphonooxybutanoate to phosphohydroxythreonine. This chain is Phosphoserine aminotransferase, found in Shewanella sp. (strain MR-7).